A 516-amino-acid chain; its full sequence is Threonine synthase 2, chloroplastic (516 aa).

The N-terminal 33 residues, M1–C33, are a transit peptide targeting the chloroplast. The span at M1–S37 shows a compositional bias: polar residues. The segment at M1–N55 is disordered. Residues P133–G135, S156–F158, N163, L164, K172, and N178 contribute to the S-adenosyl-L-methionine site. An N6-(pyridoxal phosphate)lysine modification is found at K194. Pyridoxal 5'-phosphate is bound by residues G326 to N330 and T464.

Belongs to the threonine synthase family. Homodimer. Pyridoxal 5'-phosphate serves as cofactor.

It is found in the plastid. Its subcellular location is the chloroplast. The enzyme catalyses O-phospho-L-homoserine + H2O = L-threonine + phosphate. The protein operates within amino-acid biosynthesis; L-threonine biosynthesis; L-threonine from L-aspartate: step 5/5. Allosterically activated by S-adenosyl-methionine (SAM). In terms of biological role, catalyzes the gamma-elimination of phosphate from L-phosphohomoserine and the beta-addition of water to produce L-threonine. This is Threonine synthase 2, chloroplastic (TS2) from Arabidopsis thaliana (Mouse-ear cress).